Here is a 417-residue protein sequence, read N- to C-terminus: Imidazolonepropionase (417 aa).

Fe(3+) is bound by residues H80 and H82. Residues H80 and H82 each contribute to the Zn(2+) site. Residues R89, Y152, and H187 each coordinate 4-imidazolone-5-propanoate. N-formimidoyl-L-glutamate is bound at residue Y152. Residue H252 coordinates Fe(3+). H252 is a binding site for Zn(2+). E255 contributes to the 4-imidazolone-5-propanoate binding site. Residue D326 coordinates Fe(3+). Residue D326 participates in Zn(2+) binding. 2 residues coordinate N-formimidoyl-L-glutamate: N328 and G330. S331 serves as a coordination point for 4-imidazolone-5-propanoate.

This sequence belongs to the metallo-dependent hydrolases superfamily. HutI family. Zn(2+) serves as cofactor. Fe(3+) is required as a cofactor.

Its subcellular location is the cytoplasm. The enzyme catalyses 4-imidazolone-5-propanoate + H2O = N-formimidoyl-L-glutamate. It functions in the pathway amino-acid degradation; L-histidine degradation into L-glutamate; N-formimidoyl-L-glutamate from L-histidine: step 3/3. Functionally, catalyzes the hydrolytic cleavage of the carbon-nitrogen bond in imidazolone-5-propanoate to yield N-formimidoyl-L-glutamate. It is the third step in the universal histidine degradation pathway. The sequence is that of Imidazolonepropionase from Bacteroides fragilis (strain YCH46).